The sequence spans 126 residues: Large ribosomal subunit protein uL14 (126 aa).

Belongs to the universal ribosomal protein uL14 family. As to quaternary structure, part of the 50S ribosomal subunit. Forms a cluster with proteins L3 and L19. In the 70S ribosome, L14 and L19 interact and together make contacts with the 16S rRNA in bridges B5 and B8.

Its function is as follows. Binds to 23S rRNA. Forms part of two intersubunit bridges in the 70S ribosome. This chain is Large ribosomal subunit protein uL14, found in Persephonella marina (strain DSM 14350 / EX-H1).